Here is a 40-residue protein sequence, read N- to C-terminus: Muscarinic m1-toxin3 (40 aa).

Cysteines 3 and 24 form a disulfide.

This sequence belongs to the three-finger toxin family. Short-chain subfamily. Aminergic toxin sub-subfamily. As to quaternary structure, monomer. Post-translationally, contains 4 disulfide bonds. Expressed by the venom gland.

It is found in the secreted. Its function is as follows. Binds irreversibly and specifically to M1 (CHRM1) muscarinic acetylcholine receptors, blocking further binding of antagonists and preventing the action of agonists. This Dendroaspis angusticeps (Eastern green mamba) protein is Muscarinic m1-toxin3.